Reading from the N-terminus, the 237-residue chain is Sugar fermentation stimulation protein homolog (237 aa).

This sequence belongs to the SfsA family.

This Pseudomonas putida (strain ATCC 700007 / DSM 6899 / JCM 31910 / BCRC 17059 / LMG 24140 / F1) protein is Sugar fermentation stimulation protein homolog.